A 334-amino-acid polypeptide reads, in one-letter code: Ketol-acid reductoisomerase (NADP(+)) (334 aa).

Residues Met1–Thr181 enclose the KARI N-terminal Rossmann domain. NADP(+)-binding positions include Tyr24–Gln27, Arg47, Ser50, Ser52, and Asp82–Gln85. His107 is an active-site residue. Residue Gly133 participates in NADP(+) binding. The region spanning Ser182–Ile323 is the KARI C-terminal knotted domain. Mg(2+) is bound by residues Asp190, Glu194, Glu226, and Glu230. Position 251 (Ser251) interacts with substrate.

Belongs to the ketol-acid reductoisomerase family. Mg(2+) serves as cofactor.

It carries out the reaction (2R)-2,3-dihydroxy-3-methylbutanoate + NADP(+) = (2S)-2-acetolactate + NADPH + H(+). The enzyme catalyses (2R,3R)-2,3-dihydroxy-3-methylpentanoate + NADP(+) = (S)-2-ethyl-2-hydroxy-3-oxobutanoate + NADPH + H(+). It participates in amino-acid biosynthesis; L-isoleucine biosynthesis; L-isoleucine from 2-oxobutanoate: step 2/4. Its pathway is amino-acid biosynthesis; L-valine biosynthesis; L-valine from pyruvate: step 2/4. Involved in the biosynthesis of branched-chain amino acids (BCAA). Catalyzes an alkyl-migration followed by a ketol-acid reduction of (S)-2-acetolactate (S2AL) to yield (R)-2,3-dihydroxy-isovalerate. In the isomerase reaction, S2AL is rearranged via a Mg-dependent methyl migration to produce 3-hydroxy-3-methyl-2-ketobutyrate (HMKB). In the reductase reaction, this 2-ketoacid undergoes a metal-dependent reduction by NADPH to yield (R)-2,3-dihydroxy-isovalerate. The polypeptide is Ketol-acid reductoisomerase (NADP(+)) (Vesicomyosocius okutanii subsp. Calyptogena okutanii (strain HA)).